We begin with the raw amino-acid sequence, 116 residues long: Toxin ICK-10 (116 aa).

The N-terminal stretch at 1–19 is a signal peptide; the sequence is MMKLYSLVIIATLAAAAFA. Cystine bridges form between cysteine 56–cysteine 71, cysteine 64–cysteine 77, cysteine 68–cysteine 113, and cysteine 70–cysteine 84.

The protein belongs to the neurotoxin 25 family. ICK-8 subfamily. As to expression, expressed by the venom gland.

The protein localises to the secreted. Functionally, ion channel inhibitor. In Trittame loki (Brush-footed trapdoor spider), this protein is Toxin ICK-10.